The sequence spans 203 residues: Ras-related protein Rab-13 (203 aa).

GTP contacts are provided by S17, G18, G20, K21, T22, C23, and T40. T22 is a Mg(2+) binding site. Residues 31–45 (DNFNNTYISTIGIDF) carry the Switch 1 motif. T40 contacts Mg(2+). Residues K46 and K58 each participate in a glycyl lysine isopeptide (Lys-Gly) (interchain with G-Cter in ubiquitin) cross-link. D63 contributes to the Mg(2+) binding site. Residues 63-80 (DTAGQERFKTITTAYYRG) carry the Switch 2 motif. G66, N121, K122, D124, A152, and K153 together coordinate GTP. Residues 173–203 (SGGRRSGNHSKPSSTDLKPSDKKNTNKCSLG) are disordered. At S178 the chain carries Phosphoserine. The residue at position 200 (C200) is a Cysteine methyl ester. C200 is lipidated: S-geranylgeranyl cysteine. A propeptide spans 201–203 (SLG) (removed in mature form).

This sequence belongs to the small GTPase superfamily. Rab family. Interacts (GTP-bound form) with MICALL2; competes with RAB8A and is involved in tight junctions assembly. Interacts (GTP-bound form) with MICALL1. Interacts (GTP-bound form) with MICAL1, MICAL3, MICALCL, EHBP1 and EHBP1L1; ternary complexes of RAB8A, RAB13 and either MICAL1 or EHBP1L1 are possible. Interacts with PRKACA; downstream effector of RAB13 involved in tight junction assembly. Interacts with GRB2; may recruit RAB13 to the leading edge of migrating endothelial cells where it can activate RHOA. Interacts (isoprenylated form) with PDE6D; dissociates RAB13 from membranes. Interacts with BICDL2/BICDR2. Interacts with LEPROT and LEPROTL1. Mg(2+) is required as a cofactor. Post-translationally, ubiquitinated via 'Lys-11'-linked ubiquitination on Lys-46 and Lys-58; impairing the recruitment of guanosine diphosphate (GDP) dissociation inhibitor 1/GDI1.

Its subcellular location is the cell membrane. The protein resides in the cytoplasmic vesicle membrane. It is found in the cell junction. It localises to the tight junction. The protein localises to the golgi apparatus. Its subcellular location is the trans-Golgi network membrane. The protein resides in the recycling endosome membrane. It is found in the cell projection. It localises to the lamellipodium. It carries out the reaction GTP + H2O = GDP + phosphate + H(+). With respect to regulation, regulated by guanine nucleotide exchange factors (GEFs) including DENND1C, which promote the exchange of bound GDP for free GTP. Regulated by GTPase activating proteins (GAPs) which increase the GTP hydrolysis activity. Inhibited by GDP dissociation inhibitors (GDIs). Activated in response to insulin. In terms of biological role, the small GTPases Rab are key regulators of intracellular membrane trafficking, from the formation of transport vesicles to their fusion with membranes. Rabs cycle between an inactive GDP-bound form and an active GTP-bound form that is able to recruit to membranes different sets of downstream effectors directly responsible for vesicle formation, movement, tethering and fusion. RAB13 is involved in endocytic recycling and regulates the transport to the plasma membrane of transmembrane proteins like the tight junction protein OCLN/occludin. Thereby, it regulates the assembly and the activity of tight junctions. Moreover, it may also regulate tight junction assembly by activating the PKA signaling pathway and by reorganizing the actin cytoskeleton through the activation of the downstream effectors PRKACA and MICALL2 respectively. Through its role in tight junction assembly, may play a role in the establishment of Sertoli cell barrier. Plays also a role in angiogenesis through regulation of endothelial cells chemotaxis. Also involved in neurite outgrowth. Has also been proposed to play a role in post-Golgi membrane trafficking from the TGN to the recycling endosome. Finally, it has been involved in insulin-induced transport to the plasma membrane of the glucose transporter GLUT4 and therefore may play a role in glucose homeostasis. This chain is Ras-related protein Rab-13 (RAB13), found in Mesocricetus auratus (Golden hamster).